Reading from the N-terminus, the 473-residue chain is Photosystem II CP43 reaction center protein (473 aa).

A propeptide spanning residues 1–14 (MKTLYSLRRFYPVE) is cleaved from the precursor. Thr-15 carries the N-acetylthreonine modification. Thr-15 is modified (phosphothreonine). 5 consecutive transmembrane segments (helical) span residues 69-93 (LFEV…PHLA), 134-155 (LLGP…KDRN), 178-200 (KALY…RKIT), 255-275 (KPFA…LSYS), and 291-312 (WFNN…ASQA). Glu-367 contacts [CaMn4O5] cluster. The chain crosses the membrane as a helical span at residues 447-471 (RARAAAAGFEKGIDRDFEPVLSMTP).

It belongs to the PsbB/PsbC family. PsbC subfamily. PSII is composed of 1 copy each of membrane proteins PsbA, PsbB, PsbC, PsbD, PsbE, PsbF, PsbH, PsbI, PsbJ, PsbK, PsbL, PsbM, PsbT, PsbX, PsbY, PsbZ, Psb30/Ycf12, at least 3 peripheral proteins of the oxygen-evolving complex and a large number of cofactors. It forms dimeric complexes. The cofactor is Binds multiple chlorophylls and provides some of the ligands for the Ca-4Mn-5O cluster of the oxygen-evolving complex. It may also provide a ligand for a Cl- that is required for oxygen evolution. PSII binds additional chlorophylls, carotenoids and specific lipids..

It localises to the plastid. It is found in the chloroplast thylakoid membrane. Its function is as follows. One of the components of the core complex of photosystem II (PSII). It binds chlorophyll and helps catalyze the primary light-induced photochemical processes of PSII. PSII is a light-driven water:plastoquinone oxidoreductase, using light energy to abstract electrons from H(2)O, generating O(2) and a proton gradient subsequently used for ATP formation. This Populus trichocarpa (Western balsam poplar) protein is Photosystem II CP43 reaction center protein.